The primary structure comprises 411 residues: Cladofulvin cluster transcriptional coactivator claA (411 aa).

Polar residues predominate over residues 1-27 (MSDSLAGNGMRQNLNRSSTSSNHTGHA). Residues 1–32 (MSDSLAGNGMRQNLNRSSTSSNHTGHAQNGRA) form a disordered region. One can recognise an HTH iclR-type domain in the interval 47–117 (LACQVQSLAC…DPGHIAHTAL (71 aa)). Positions 77–96 (LHDVAELANVPASQLSRVVR) form a DNA-binding region, H-T-H motif.

It localises to the nucleus. Its function is as follows. Transcriptional coactivator; part of the gene cluster that mediates the biosynthesis of cladofulvin, a conidial pigment not required for virulence but that plays a role in fitness and resistance to environmental stresses including UV light and low-temperature stress. With claE, coregulates the production of cladofulvin. The sequence is that of Cladofulvin cluster transcriptional coactivator claA from Passalora fulva (Tomato leaf mold).